A 210-amino-acid polypeptide reads, in one-letter code: MNWPDYSLEEAALRSGARFVAGVDEVGRGPLAGPVTAAAVILDAGCIPEGLNDSKKLTAKRREALAELVMARCDWAVGHASVEEIDRLNILRASHLAMCRAIAGLRQRPCLVLVDGNMLPRDLDLPGQAVVGGDARCLSIAAASILAKLLRDRIMVDLAQQHPGYGWEANAGYPTPAHRQALLDLGVTPYHRRSFAPVHKILCKEETATR.

One can recognise an RNase H type-2 domain in the interval Arg18–Thr207. Residues Asp24, Glu25, and Asp115 each contribute to the a divalent metal cation site.

Belongs to the RNase HII family. It depends on Mn(2+) as a cofactor. The cofactor is Mg(2+).

The protein resides in the cytoplasm. It catalyses the reaction Endonucleolytic cleavage to 5'-phosphomonoester.. Endonuclease that specifically degrades the RNA of RNA-DNA hybrids. The protein is Ribonuclease HII of Paracoccus denitrificans (strain Pd 1222).